The primary structure comprises 336 residues: HTH-type transcriptional regulator CdhR (336 aa).

Residues 213–311 (VQVIGEMERH…AASPSQDRAV (99 aa)) form the HTH araC/xylS-type domain. 2 DNA-binding regions (H-T-H motif) span residues 230–251 (LELA…RVHL) and 278–301 (VLQV…RARF). A disordered region spans residues 305 to 336 (PSQDRAVLPLKAPAATPPGAPAGHRTPRAERG).

Induces the transcription of the PA5384-PA5388 operon in response to carnitine. This operon is involved in the degradation of L-carnitine, and allows P.aeruginosa to grow on L-carnitine as the sole source of carbon and nitrogen. In Pseudomonas aeruginosa (strain ATCC 15692 / DSM 22644 / CIP 104116 / JCM 14847 / LMG 12228 / 1C / PRS 101 / PAO1), this protein is HTH-type transcriptional regulator CdhR (cdhR).